We begin with the raw amino-acid sequence, 57 residues long: Large ribosomal subunit protein bL32 (57 aa).

Residues 1–19 show a composition bias toward basic residues; sequence MAVPKRRMSRSNTRSRRSQ. Residues 1–21 are disordered; the sequence is MAVPKRRMSRSNTRSRRSQWK.

Belongs to the bacterial ribosomal protein bL32 family.

This chain is Large ribosomal subunit protein bL32, found in Mycobacteroides abscessus (strain ATCC 19977 / DSM 44196 / CCUG 20993 / CIP 104536 / JCM 13569 / NCTC 13031 / TMC 1543 / L948) (Mycobacterium abscessus).